The sequence spans 462 residues: Dipeptidyl peptidase 1 (462 aa).

The signal sequence occupies residues 1–24 (MGPWTHSLRAALLLVLLGVCTVSS). Asparagine 29 and asparagine 53 each carry an N-linked (GlcNAc...) asparagine glycan. 2 cysteine pairs are disulfide-bonded: cysteine 30–cysteine 118 and cysteine 54–cysteine 136. Positions 135–229 (ACFVGKKMAN…TDEIQQQILS (95 aa)) are excised as a propeptide. The N-linked (GlcNAc...) asparagine glycan is linked to asparagine 144. 3 disulfide bridges follow: cysteine 254–cysteine 297, cysteine 290–cysteine 330, and cysteine 320–cysteine 336. Cysteine 257 is a catalytic residue. An N-linked (GlcNAc...) asparagine glycan is attached at asparagine 275. Residues phenylalanine 301 and tyrosine 303 each coordinate chloride. A chloride-binding site is contributed by tyrosine 346. Active-site residues include histidine 404 and asparagine 426.

Belongs to the peptidase C1 family. As to quaternary structure, tetramer of heterotrimers consisting of exclusion domain, heavy- and light chains. The cofactor is chloride. Broadly distributed, but higher levels found in liver, spleen, intestine, lung and kidney.

The protein resides in the lysosome. The catalysed reaction is Release of an N-terminal dipeptide, Xaa-Yaa-|-Zaa-, except when Xaa is Arg or Lys, or Yaa or Zaa is Pro.. Thiol protease. Has dipeptidylpeptidase activity. Active against a broad range of dipeptide substrates composed of both polar and hydrophobic amino acids. Proline cannot occupy the P1 position and arginine cannot occupy the P2 position of the substrate. Can act as both an exopeptidase and endopeptidase. Activates serine proteases such as elastase, cathepsin G and granzymes A and B. The sequence is that of Dipeptidyl peptidase 1 (Ctsc) from Rattus norvegicus (Rat).